The chain runs to 215 residues: Thymidylate kinase (215 aa).

12–19 (GLEGAGKT) provides a ligand contact to ATP.

This sequence belongs to the thymidylate kinase family.

It carries out the reaction dTMP + ATP = dTDP + ADP. Its function is as follows. Phosphorylation of dTMP to form dTDP in both de novo and salvage pathways of dTTP synthesis. The protein is Thymidylate kinase of Halorhodospira halophila (strain DSM 244 / SL1) (Ectothiorhodospira halophila (strain DSM 244 / SL1)).